The chain runs to 454 residues: NADH-quinone oxidoreductase subunit H (454 aa).

9 helical membrane-spanning segments follow: residues 18 to 38, 88 to 108, 131 to 151, 172 to 192, 206 to 226, 256 to 276, 296 to 316, 328 to 348, and 360 to 380; these read WWLV…TVLF, VVYV…IAVI, LPIA…GIVL, MISY…YSGS, WYIV…VGET, FMLA…TLFL, WWPM…FIWL, LMKL…MLVA, and FADI…LSFV. A disordered region spans residues 395-454; sequence AEEPAAFDPMAGGFPVPPLPGQTLPPVPRRRPRRDRELIVSGGPDTASDGPANGKEASDG. Over residues 409–421 the composition is skewed to pro residues; sequence PVPPLPGQTLPPV.

It belongs to the complex I subunit 1 family. NDH-1 is composed of 14 different subunits. Subunits NuoA, H, J, K, L, M, N constitute the membrane sector of the complex.

The protein localises to the cell membrane. The catalysed reaction is a quinone + NADH + 5 H(+)(in) = a quinol + NAD(+) + 4 H(+)(out). NDH-1 shuttles electrons from NADH, via FMN and iron-sulfur (Fe-S) centers, to quinones in the respiratory chain. The immediate electron acceptor for the enzyme in this species is believed to be ubiquinone. Couples the redox reaction to proton translocation (for every two electrons transferred, four hydrogen ions are translocated across the cytoplasmic membrane), and thus conserves the redox energy in a proton gradient. This subunit may bind ubiquinone. The protein is NADH-quinone oxidoreductase subunit H of Streptomyces avermitilis (strain ATCC 31267 / DSM 46492 / JCM 5070 / NBRC 14893 / NCIMB 12804 / NRRL 8165 / MA-4680).